The primary structure comprises 355 residues: MSGQPKRLMVMAGGTGGHVFPGLAVAHHLMAQGWQVRWLGTADRMEADLVPKHGINIEFIRISGLRGKGVKALLAAPLRIFNAWRQARAIMKRFKPDVVLGMGGYVSGPGGLAAWSLGIPVVLHEQNGIAGLTNKWLAKIATTVMQAFPGAFPNAEVVGNPVRTDVLALPLPQTRLVSRDGPIRVLVVGGSQGARVLNQTLPQVAARLGDAVTIWHQSGKGAQHTVEQAYAEAGQPQHKVTEFIDDMAAAYAWADVVVCRSGALTVSEIAAAGLPAIFVPFQHKDRQQYWNALPLENAGAAKILEQPQFTAEAVADTLAGWSRDTLLTMAERARAVSILDATERVASEVIRVART.

Residues 15–17, Asn-127, Arg-163, Ser-191, Ile-244, 263–268, and Gln-288 contribute to the UDP-N-acetyl-alpha-D-glucosamine site; these read TGG and ALTVSE.

It belongs to the glycosyltransferase 28 family. MurG subfamily.

The protein localises to the cell inner membrane. It catalyses the reaction di-trans,octa-cis-undecaprenyl diphospho-N-acetyl-alpha-D-muramoyl-L-alanyl-D-glutamyl-meso-2,6-diaminopimeloyl-D-alanyl-D-alanine + UDP-N-acetyl-alpha-D-glucosamine = di-trans,octa-cis-undecaprenyl diphospho-[N-acetyl-alpha-D-glucosaminyl-(1-&gt;4)]-N-acetyl-alpha-D-muramoyl-L-alanyl-D-glutamyl-meso-2,6-diaminopimeloyl-D-alanyl-D-alanine + UDP + H(+). The protein operates within cell wall biogenesis; peptidoglycan biosynthesis. Cell wall formation. Catalyzes the transfer of a GlcNAc subunit on undecaprenyl-pyrophosphoryl-MurNAc-pentapeptide (lipid intermediate I) to form undecaprenyl-pyrophosphoryl-MurNAc-(pentapeptide)GlcNAc (lipid intermediate II). This is UDP-N-acetylglucosamine--N-acetylmuramyl-(pentapeptide) pyrophosphoryl-undecaprenol N-acetylglucosamine transferase from Salmonella arizonae (strain ATCC BAA-731 / CDC346-86 / RSK2980).